Here is a 450-residue protein sequence, read N- to C-terminus: Phosphoglucosamine mutase (450 aa).

The active-site Phosphoserine intermediate is Ser-101. Ser-101, Asp-240, Asp-242, and Asp-244 together coordinate Mg(2+). Ser-101 carries the post-translational modification Phosphoserine.

It belongs to the phosphohexose mutase family. The cofactor is Mg(2+). Post-translationally, activated by phosphorylation.

It catalyses the reaction alpha-D-glucosamine 1-phosphate = D-glucosamine 6-phosphate. Functionally, catalyzes the conversion of glucosamine-6-phosphate to glucosamine-1-phosphate. In Streptococcus thermophilus (strain CNRZ 1066), this protein is Phosphoglucosamine mutase.